The following is a 206-amino-acid chain: Enterobactin synthase component D (206 aa).

Mg(2+) contacts are provided by Asp-107, Glu-109, and Glu-152.

It belongs to the P-Pant transferase superfamily. EntD family. EntB, EntD, EntE, and EntF form a multienzyme complex called enterobactin synthase. It depends on Mg(2+) as a cofactor.

The protein resides in the membrane. It carries out the reaction apo-[aryl-carrier protein] + CoA = holo-[aryl-carrier protein] + adenosine 3',5'-bisphosphate + H(+). The enzyme catalyses apo-[peptidyl-carrier protein] + CoA = holo-[peptidyl-carrier protein] + adenosine 3',5'-bisphosphate + H(+). The protein operates within siderophore biosynthesis; enterobactin biosynthesis. In terms of biological role, involved in the biosynthesis of the siderophore enterobactin (enterochelin), which is a macrocyclic trimeric lactone of N-(2,3-dihydroxybenzoyl)-serine. The serine trilactone serves as a scaffolding for the three catechol functionalities that provide hexadentate coordination for the tightly ligated iron(2+) atoms. Plays an essential role in the assembly of the enterobactin by catalyzing the transfer of the 4'-phosphopantetheine (Ppant) moiety from coenzyme A to the apo-domains of both EntB (ArCP domain) and EntF (PCP domain) to yield their holo-forms which make them competent for the activation of 2,3-dihydroxybenzoate (DHB) and L-serine, respectively. The polypeptide is Enterobactin synthase component D (Escherichia coli (strain K12)).